A 345-amino-acid polypeptide reads, in one-letter code: Tetraacyldisaccharide 4'-kinase (345 aa).

Position 61-68 (61-68 (TAGGTGKT)) interacts with ATP.

Belongs to the LpxK family.

It catalyses the reaction a lipid A disaccharide + ATP = a lipid IVA + ADP + H(+). It participates in glycolipid biosynthesis; lipid IV(A) biosynthesis; lipid IV(A) from (3R)-3-hydroxytetradecanoyl-[acyl-carrier-protein] and UDP-N-acetyl-alpha-D-glucosamine: step 6/6. Its function is as follows. Transfers the gamma-phosphate of ATP to the 4'-position of a tetraacyldisaccharide 1-phosphate intermediate (termed DS-1-P) to form tetraacyldisaccharide 1,4'-bis-phosphate (lipid IVA). This Xanthomonas axonopodis pv. citri (strain 306) protein is Tetraacyldisaccharide 4'-kinase.